Reading from the N-terminus, the 243-residue chain is DNA repair protein RecO (243 aa).

The protein belongs to the RecO family.

Its function is as follows. Involved in DNA repair and RecF pathway recombination. In Beutenbergia cavernae (strain ATCC BAA-8 / DSM 12333 / CCUG 43141 / JCM 11478 / NBRC 16432 / NCIMB 13614 / HKI 0122), this protein is DNA repair protein RecO.